The primary structure comprises 304 residues: Peroxisomal membrane protein 13 (304 aa).

2 disordered regions span residues 1 to 78 and 258 to 304; these read MASQ…WEQQ and PRKM…VWGN. Composition is skewed to polar residues over residues 19 to 44 and 56 to 67; these read NTSG…SGTA and RPNTAANMNSLS. A compositionally biased stretch (low complexity) spans 262-279; that stretch reads QQPPQGPNGLPLPHQPHG.

It belongs to the peroxin-13 family. Interacts with PEX14; forming the PEX13-PEX14 docking complex. Interacts (via N-terminus) with PEX7, but not with PEX5. Interacts with APEM9 (via N-terminus). Highly expressed in pollen. Detected in shoots, roots, stems, leaves, inflorescences and emasculated postils. Strongly expressed in both male and female gametophytes during fertilization.

Its subcellular location is the peroxisome membrane. Its function is as follows. Component of the PEX13-PEX14 docking complex, a translocon channel that specifically mediates the import of peroxisomal cargo proteins bound to PEX5 receptor. The PEX13-PEX14 docking complex forms a large import pore which can be opened to a diameter of about 9 nm. Mechanistically, PEX5 receptor along with cargo proteins associates with the PEX14 subunit of the PEX13-PEX14 docking complex in the cytosol, leading to the insertion of the receptor into the organelle membrane with the concomitant translocation of the cargo into the peroxisome matrix. Essential for pollen-tube discharge that take place only in the presence of functional peroxisomes in either the male or the female gametophyte. This chain is Peroxisomal membrane protein 13, found in Arabidopsis thaliana (Mouse-ear cress).